The chain runs to 284 residues: TM2 domain-containing protein almondex (284 aa).

An N-terminal signal peptide occupies residues 1-32 (MRLQRQCIVVNMRSAIVLIMIFVLTGIRNSET). The segment at 33-63 (ASGGNQMDLSDSKGDHKDNSNASNGNGNAND) is disordered. The Extracellular portion of the chain corresponds to 33 to 225 (ASGGNQMDLS…NWTQGYRWST (193 aa)). The segment covering 42–51 (SDSKGDHKDN) has biased composition (basic and acidic residues). The span at 52-63 (SNASNGNGNAND) shows a compositional bias: low complexity. N-linked (GlcNAc...) asparagine glycosylation is found at Asn-53, Asn-89, Asn-141, Asn-194, Asn-206, and Asn-216. The region spanning 220-267 (GYRWSTALLISLTLGGFGADRFYLGHWQEGIGKLFSFGGLGVWTIIDV) is the TM2 domain. A helical transmembrane segment spans residues 226–246 (ALLISLTLGGFGADRFYLGHW). The Cytoplasmic segment spans residues 247-249 (QEG). A helical transmembrane segment spans residues 250-270 (IGKLFSFGGLGVWTIIDVLLI). At 271-284 (SMHYLGPADGSLYI) the chain is on the extracellular side.

It belongs to the TM2 family. As to expression, expressed in female ovary, mainly in nurse cells (at protein level). Expressed in the brain at low levels (at protein level).

The protein localises to the membrane. It localises to the vesicle. In terms of biological role, positive regulator of Notch signaling during lateral inhibition and boundary formation. Interacts with Notch signaling at the membrane, at the level of gamma-secretase-mediated S3 cleavage. May regulate Notch signaling by regulating the subcellular localization of N/Notch in a context dependent manner. Maternal neurogenic factor involved in Notch signaling-dependent mesectodermal and neuroectodermal specification during early embryogenesis. Functions cooperatively with bisc/TM2D1 and amrt/TM2D2. Required for maintenance of neuronal function. Involved in imaginal specification of eyes and wings. In Drosophila melanogaster (Fruit fly), this protein is TM2 domain-containing protein almondex.